Here is a 575-residue protein sequence, read N- to C-terminus: Physarolisin (575 aa).

An N-terminal signal peptide occupies residues 1–18 (MRLLSLLFLLGLATLSFA). Positions 19–173 (VRSQWAQQGR…SIKNARTQVG (155 aa)) are cleaved as a propeptide — removed in mature form. In terms of domain architecture, Peptidase S53 spans 179–574 (YIVPYVIFDL…SKLLAFVQTL (396 aa)). N200 is a glycosylation site (N-linked (GlcNAc...) asparagine). Catalysis depends on charge relay system residues E248 and D252. N-linked (GlcNAc...) asparagine glycans are attached at residues N262, N307, N380, and N453. Residue S484 is the Charge relay system of the active site. Ca(2+) is bound by residues D529, I530, G552, and D554.

Ca(2+) is required as a cofactor. Post-translationally, autocatalytically processed. In terms of processing, N-glycosylated.

It catalyses the reaction Milk clotting activity. Preferential cleavage of 8-Gly-|-Ser-9 in B chain of insulin most rapidly, followed by 11-Leu-|-Val-12, 19-Cys(SO(3)H)-|-Gly and 24-Phe-|-Phe-25. No action on Ac-Phe-Tyr(I)2.. Its activity is regulated as follows. Inhibited by diisopropylfluorophosphate (DFP) and diazoacetyl-D,L-norleucine methyl ester (DAN). The chain is Physarolisin from Physarum polycephalum (Slime mold).